The following is a 450-amino-acid chain: Protein indeterminate-domain 13 (450 aa).

At Ser-54 the chain carries Phosphoserine. 2 consecutive C2H2-type zinc fingers follow at residues 64–86 (FFCE…KRGH) and 106–136 (YICP…SRKH). Residues 128–135 (IKKHFSRK) carry the Nuclear localization signal motif. Residues 141–165 (WKCDKCSKKYAVISDWKAHNKICGS) form a C2H2-type 2; degenerate zinc finger. Residues Cys-143, Cys-146, His-159, Cys-163, Cys-170, Cys-172, His-185, and Cys-189 each coordinate Zn(2+). A CCHC-type 2; atypical zinc finger spans residues 168 to 191 (FRCDCGTLFSRKDSFISHRSFCDV). Residues 178-190 (RKDSFISHRSFCD) form an SHR-binding region. Residues 248–263 (FGQKFTNSNPTQQQPN) are compositionally biased toward polar residues. Positions 248 to 280 (FGQKFTNSNPTQQQPNALALSSPPSPRSTSDSV) are disordered.

Its subcellular location is the nucleus. Its function is as follows. Probable transcription factor. This is Protein indeterminate-domain 13 from Arabidopsis thaliana (Mouse-ear cress).